We begin with the raw amino-acid sequence, 275 residues long: 2,3,4,5-tetrahydropyridine-2,6-dicarboxylate N-succinyltransferase (275 aa).

The substrate site is built by arginine 104 and aspartate 141.

It belongs to the transferase hexapeptide repeat family. In terms of assembly, homotrimer.

It localises to the cytoplasm. The enzyme catalyses (S)-2,3,4,5-tetrahydrodipicolinate + succinyl-CoA + H2O = (S)-2-succinylamino-6-oxoheptanedioate + CoA. It participates in amino-acid biosynthesis; L-lysine biosynthesis via DAP pathway; LL-2,6-diaminopimelate from (S)-tetrahydrodipicolinate (succinylase route): step 1/3. The protein is 2,3,4,5-tetrahydropyridine-2,6-dicarboxylate N-succinyltransferase of Tolumonas auensis (strain DSM 9187 / NBRC 110442 / TA 4).